We begin with the raw amino-acid sequence, 344 residues long: Tetraacyldisaccharide 4'-kinase (344 aa).

Residue 65 to 72 coordinates ATP; sequence HAGGTGKT.

It belongs to the LpxK family.

It carries out the reaction a lipid A disaccharide + ATP = a lipid IVA + ADP + H(+). It participates in glycolipid biosynthesis; lipid IV(A) biosynthesis; lipid IV(A) from (3R)-3-hydroxytetradecanoyl-[acyl-carrier-protein] and UDP-N-acetyl-alpha-D-glucosamine: step 6/6. Transfers the gamma-phosphate of ATP to the 4'-position of a tetraacyldisaccharide 1-phosphate intermediate (termed DS-1-P) to form tetraacyldisaccharide 1,4'-bis-phosphate (lipid IVA). This chain is Tetraacyldisaccharide 4'-kinase, found in Neisseria meningitidis serogroup B (strain ATCC BAA-335 / MC58).